We begin with the raw amino-acid sequence, 254 residues long: PHD finger protein ALFIN-LIKE 8 (254 aa).

The tract at residues 137–194 (GTAKKQSKEKTPKTSGKSNKSGTKPSRQPEPNSRGPKMPPPKDEDDSGGEEEEEEEDH) is disordered. The span at 149 to 162 (KTSGKSNKSGTKPS) shows a compositional bias: low complexity. Positions 179-194 (DEDDSGGEEEEEEEDH) are enriched in acidic residues. The PHD-type zinc finger occupies 196-248 (NTLCGACGDNYGQDEFWICCDACETWFHGKCVKITPAKAEHIKHYKCPNCSSS).

It belongs to the Alfin family. As to quaternary structure, interacts with H3K4me3 and to a lesser extent with H3K4me2.

Its subcellular location is the nucleus. Histone-binding component that specifically recognizes H3 tails trimethylated on 'Lys-4' (H3K4me3), which mark transcription start sites of virtually all active genes. The sequence is that of PHD finger protein ALFIN-LIKE 8 from Oryza sativa subsp. japonica (Rice).